Consider the following 273-residue polypeptide: Tryptophan synthase alpha chain (273 aa).

Catalysis depends on proton acceptor residues Glu49 and Asp60.

The protein belongs to the TrpA family. In terms of assembly, tetramer of two alpha and two beta chains.

The catalysed reaction is (1S,2R)-1-C-(indol-3-yl)glycerol 3-phosphate + L-serine = D-glyceraldehyde 3-phosphate + L-tryptophan + H2O. It participates in amino-acid biosynthesis; L-tryptophan biosynthesis; L-tryptophan from chorismate: step 5/5. Functionally, the alpha subunit is responsible for the aldol cleavage of indoleglycerol phosphate to indole and glyceraldehyde 3-phosphate. The polypeptide is Tryptophan synthase alpha chain (Thiobacillus denitrificans (strain ATCC 25259 / T1)).